Here is a 387-residue protein sequence, read N- to C-terminus: Phosphoglycerate kinase (387 aa).

Substrate is bound by residues Asp21 to Asn23, Arg36, His59 to Arg62, Arg113, and Arg146. ATP-binding positions include Lys197, Glu314, and Gly340–Thr343.

It belongs to the phosphoglycerate kinase family. Monomer.

It is found in the cytoplasm. It catalyses the reaction (2R)-3-phosphoglycerate + ATP = (2R)-3-phospho-glyceroyl phosphate + ADP. It functions in the pathway carbohydrate degradation; glycolysis; pyruvate from D-glyceraldehyde 3-phosphate: step 2/5. This is Phosphoglycerate kinase from Pseudomonas savastanoi pv. phaseolicola (strain 1448A / Race 6) (Pseudomonas syringae pv. phaseolicola (strain 1448A / Race 6)).